Reading from the N-terminus, the 523-residue chain is Signal peptide peptidase-like 2A (523 aa).

An N-terminal signal peptide occupies residues M1–A25. The Lumenal segment spans residues Q26 to L175. 6 N-linked (GlcNAc...) asparagine glycosylation sites follow: N51, N61, N69, N119, N129, and N135. Residues L70–L155 form the PA domain. The chain crosses the membrane as a helical span at residues V176 to I196. The Cytoplasmic portion of the chain corresponds to E197 to P224. Residues L225–Y245 traverse the membrane as a helical segment. Residues R246–W247 are Lumenal-facing. Residues L248–L268 form a helical membrane-spanning segment. The Cytoplasmic segment spans residues S269–N288. Residues I289–V309 form a helical membrane-spanning segment. Topologically, residues F310–R315 are lumenal. Residues W316–M336 form a helical membrane-spanning segment. Residues K337–C344 are Cytoplasmic-facing. The helical transmembrane segment at V345–I365 threads the bilayer. D355 is a catalytic residue. The Lumenal segment spans residues T366 to S403. A helical transmembrane segment spans residues V404–I424. Residue D416 is part of the active site. Residues A425 to Y440 lie on the Cytoplasmic side of the membrane. Residues I441 to M461 traverse the membrane as a helical segment. Over K462–T463 the chain is Lumenal. Residues G464–W484 form a helical membrane-spanning segment. The short motif at P466–L468 is the PAL element. The Cytoplasmic portion of the chain corresponds to S485–Q523. A YXXo lysosomal targeting motif motif is present at residues Y498–M501.

It belongs to the peptidase A22B family. As to quaternary structure, interacts with ITM2B. Post-translationally, glycosylated.

The protein localises to the late endosome membrane. It is found in the lysosome membrane. It localises to the membrane. In terms of biological role, intramembrane-cleaving aspartic protease (I-CLiP) that cleaves type II membrane signal peptides in the hydrophobic plane of the membrane. Functions in FASLG, ITM2B and TNF processing. Catalyzes the intramembrane cleavage of the anchored fragment of shed TNF-alpha (TNF), which promotes the release of the intracellular domain (ICD) for signaling to the nucleus. Also responsible for the intramembrane cleavage of Fas antigen ligand FASLG, which promotes the release of the intracellular FasL domain (FasL ICD). Essential for degradation of the invariant chain CD74 that plays a central role in the function of antigen-presenting cells in the immune system. Plays a role in the regulation of innate and adaptive immunity. The protein is Signal peptide peptidase-like 2A of Mus musculus (Mouse).